The sequence spans 447 residues: Probable glycine dehydrogenase (decarboxylating) subunit 1 (447 aa).

The protein belongs to the GcvP family. N-terminal subunit subfamily. The glycine cleavage system is composed of four proteins: P, T, L and H. In this organism, the P 'protein' is a heterodimer of two subunits.

The catalysed reaction is N(6)-[(R)-lipoyl]-L-lysyl-[glycine-cleavage complex H protein] + glycine + H(+) = N(6)-[(R)-S(8)-aminomethyldihydrolipoyl]-L-lysyl-[glycine-cleavage complex H protein] + CO2. In terms of biological role, the glycine cleavage system catalyzes the degradation of glycine. The P protein binds the alpha-amino group of glycine through its pyridoxal phosphate cofactor; CO(2) is released and the remaining methylamine moiety is then transferred to the lipoamide cofactor of the H protein. The protein is Probable glycine dehydrogenase (decarboxylating) subunit 1 of Bacillus cereus (strain AH187).